The primary structure comprises 506 residues: Putative transporter SVOPL (506 aa).

A run of 10 helical transmembrane segments spans residues 57 to 77 (SIGF…ANIV), 104 to 124 (ALVS…CGYI), 133 to 153 (VVFG…FSTS), 190 to 210 (LLPL…VLGM), 220 to 240 (WMIR…MFIP), 297 to 317 (TSLL…GSVL), 362 to 382 (LISC…LNIV), 397 to 417 (FFFM…LLFL), 444 to 464 (IGMG…PFIA), and 472 to 492 (VILA…GVFF).

Belongs to the major facilitator superfamily.

The protein resides in the membrane. In Danio rerio (Zebrafish), this protein is Putative transporter SVOPL (svopl).